Here is a 349-residue protein sequence, read N- to C-terminus: Diacylglycerol O-acyltransferase 2B (349 aa).

The next 2 helical transmembrane spans lie at 44–64 (ICLIIYLYLFTIPLLWPILIM) and 114–134 (YIMSYHPHGIISMAAFANFAT).

It belongs to the diacylglycerol acyltransferase family.

The protein localises to the endoplasmic reticulum membrane. It catalyses the reaction an acyl-CoA + a 1,2-diacyl-sn-glycerol = a triacyl-sn-glycerol + CoA. Its pathway is glycerolipid metabolism; triacylglycerol biosynthesis. Its function is as follows. Catalyzes the terminal and only committed step in triacylglycerol synthesis by using diacylglycerol and fatty acyl CoA as substrates. Required for storage lipid synthesis. This Umbelopsis ramanniana (Oleaginous fungus) protein is Diacylglycerol O-acyltransferase 2B (DGAT2B).